Reading from the N-terminus, the 515-residue chain is 2,3-bisphosphoglycerate-independent phosphoglycerate mutase (515 aa).

Residues Asp-14 and Ser-64 each coordinate Mn(2+). The Phosphoserine intermediate role is filled by Ser-64. Substrate contacts are provided by residues His-125, 155-156 (RD), Arg-187, Arg-193, 263-266 (RADR), and Lys-337. Mn(2+)-binding residues include Asp-404, His-408, Asp-445, His-446, and His-464.

The protein belongs to the BPG-independent phosphoglycerate mutase family. Monomer. The cofactor is Mn(2+).

It carries out the reaction (2R)-2-phosphoglycerate = (2R)-3-phosphoglycerate. The protein operates within carbohydrate degradation; glycolysis; pyruvate from D-glyceraldehyde 3-phosphate: step 3/5. In terms of biological role, catalyzes the interconversion of 2-phosphoglycerate and 3-phosphoglycerate. This chain is 2,3-bisphosphoglycerate-independent phosphoglycerate mutase, found in Yersinia pestis bv. Antiqua (strain Antiqua).